The primary structure comprises 34 residues: Calcitonin-like peptide 1 (34 aa).

Cys-2 and Cys-7 form a disulfide bridge. Residue Pro-34 is modified to Proline amide.

This chain is Calcitonin-like peptide 1, found in Odorrana schmackeri (Schmacker's frog).